Reading from the N-terminus, the 215-residue chain is Cytochrome b6 (215 aa).

A helical membrane pass occupies residues 32 to 52; it reads IFYCLGGITLTCFLVQVATGF. Cys-35 contacts heme c. The heme b site is built by His-86 and His-100. Transmembrane regions (helical) follow at residues 90-110, 116-136, and 186-206; these read ASMMVLMMILHVFRVYLTGGF, LTWVTGVVLGVLTASFGVTGY, and LHTFVLPLLTAVFMLMHFLMI. The heme b site is built by His-187 and His-202.

This sequence belongs to the cytochrome b family. PetB subfamily. The 4 large subunits of the cytochrome b6-f complex are cytochrome b6, subunit IV (17 kDa polypeptide, PetD), cytochrome f and the Rieske protein, while the 4 small subunits are PetG, PetL, PetM and PetN. The complex functions as a dimer. The cofactor is heme b. It depends on heme c as a cofactor.

Its subcellular location is the plastid. It localises to the chloroplast thylakoid membrane. Component of the cytochrome b6-f complex, which mediates electron transfer between photosystem II (PSII) and photosystem I (PSI), cyclic electron flow around PSI, and state transitions. The protein is Cytochrome b6 of Arabidopsis thaliana (Mouse-ear cress).